We begin with the raw amino-acid sequence, 204 residues long: Acyl-homoserine-lactone synthase (204 aa).

The protein belongs to the autoinducer synthase family.

It carries out the reaction a fatty acyl-[ACP] + S-adenosyl-L-methionine = an N-acyl-L-homoserine lactone + S-methyl-5'-thioadenosine + holo-[ACP] + H(+). Required for the synthesis of acyl-HSL autoinducers that bind to SolR. This chain is Acyl-homoserine-lactone synthase (solI), found in Ralstonia nicotianae (strain ATCC BAA-1114 / GMI1000) (Ralstonia solanacearum).